Here is a 444-residue protein sequence, read N- to C-terminus: uncharacterized protein (444 aa).

Residues 1-11 show a composition bias toward basic and acidic residues; the sequence is MASSAGRDKLR. Residues 1–35 are disordered; the sequence is MASSAGRDKLRSRGQRVFAFGSSTPRDLSHMSKVP.

This is an uncharacterized protein from Caenorhabditis elegans.